We begin with the raw amino-acid sequence, 385 residues long: Probable splicing factor YJU2B (385 aa).

The interval 1 to 26 is disordered; that stretch reads MGERKGQNKYYPPDFNPEKHGSLNRY. The residue at position 40 (Ser40) is a Phosphoserine. Positions 182–214 form a coiled coil; sequence LNSMLRRHFREKKKAMQEEEEKDQALQAKASLA. The disordered stretch occupies residues 257-385; the sequence is PSAQGPSASS…VADYSDSESE (129 aa). Residues 258–271 are compositionally biased toward low complexity; sequence SAQGPSASSSKASS. The residue at position 306 (Ser306) is a Phosphoserine. A compositionally biased stretch (polar residues) spans 359 to 373; sequence GSSQEDLLNPNTPNA.

Belongs to the CWC16 family.

Its subcellular location is the nucleus. In terms of biological role, may be involved in mRNA splicing. The protein is Probable splicing factor YJU2B (Yju2b) of Mus musculus (Mouse).